The sequence spans 205 residues: MIGKLKGTIDEIGDDHVLVDVHGVCYVAHCSSRTLARLGSPGEAIVLFIETYVREDQLKLFGFMSALEREWFNLLQSVQGVGAKVALAILATLTPSELANAIALQDKPAIARAPGVGPKVALRLVTELKNKAPAFTGDAGSAIGLKQELGEGVASAPVSDAVSALTNLGYSRDQAANAIAAALKNGGEGADSAKLIRLGLKELSR.

Residues 1 to 64 form a domain I region; the sequence is MIGKLKGTID…EDQLKLFGFM (64 aa). The segment at 65 to 143 is domain II; the sequence is SALEREWFNL…AFTGDAGSAI (79 aa). The interval 144–153 is flexible linker; that stretch reads GLKQELGEGV. Positions 153–205 are domain III; that stretch reads VASAPVSDAVSALTNLGYSRDQAANAIAAALKNGGEGADSAKLIRLGLKELSR.

It belongs to the RuvA family. In terms of assembly, homotetramer. Forms an RuvA(8)-RuvB(12)-Holliday junction (HJ) complex. HJ DNA is sandwiched between 2 RuvA tetramers; dsDNA enters through RuvA and exits via RuvB. An RuvB hexamer assembles on each DNA strand where it exits the tetramer. Each RuvB hexamer is contacted by two RuvA subunits (via domain III) on 2 adjacent RuvB subunits; this complex drives branch migration. In the full resolvosome a probable DNA-RuvA(4)-RuvB(12)-RuvC(2) complex forms which resolves the HJ.

Its subcellular location is the cytoplasm. The RuvA-RuvB-RuvC complex processes Holliday junction (HJ) DNA during genetic recombination and DNA repair, while the RuvA-RuvB complex plays an important role in the rescue of blocked DNA replication forks via replication fork reversal (RFR). RuvA specifically binds to HJ cruciform DNA, conferring on it an open structure. The RuvB hexamer acts as an ATP-dependent pump, pulling dsDNA into and through the RuvAB complex. HJ branch migration allows RuvC to scan DNA until it finds its consensus sequence, where it cleaves and resolves the cruciform DNA. The polypeptide is Holliday junction branch migration complex subunit RuvA (Allorhizobium ampelinum (strain ATCC BAA-846 / DSM 112012 / S4) (Agrobacterium vitis (strain S4))).